The primary structure comprises 118 residues: Large ribosomal subunit protein uL22 (118 aa).

It belongs to the universal ribosomal protein uL22 family. In terms of assembly, part of the 50S ribosomal subunit.

In terms of biological role, this protein binds specifically to 23S rRNA; its binding is stimulated by other ribosomal proteins, e.g. L4, L17, and L20. It is important during the early stages of 50S assembly. It makes multiple contacts with different domains of the 23S rRNA in the assembled 50S subunit and ribosome. The globular domain of the protein is located near the polypeptide exit tunnel on the outside of the subunit, while an extended beta-hairpin is found that lines the wall of the exit tunnel in the center of the 70S ribosome. The chain is Large ribosomal subunit protein uL22 from Treponema denticola (strain ATCC 35405 / DSM 14222 / CIP 103919 / JCM 8153 / KCTC 15104).